Consider the following 134-residue polypeptide: MKPRRPSCADSGSDSDSRDPEKFESAMRRRMAANARERKRMQGLNTAFDRLRKVVPQWGQDKKLSKYETLQMALSYIMALNRILSDAGRHVDPQKDWLNLQFDGLQTEGYFMHYDSPVESDCMLSSFSYHYESL.

The tract at residues 1–27 (MKPRRPSCADSGSDSDSRDPEKFESAM) is disordered. The span at 15–27 (SDSRDPEKFESAM) shows a compositional bias: basic and acidic residues. The bHLH domain maps to 28–80 (RRRMAANARERKRMQGLNTAFDRLRKVVPQWGQDKKLSKYETLQMALSYIMAL).

Its subcellular location is the nucleus. It localises to the perikaryon. It is found in the cell projection. The protein localises to the axon. Functionally, transcription factor that binds to DNA at the consensus sequence 5'-CAG[GC]TG-3'. Involved in the differentiation of retinal ganglion cells, photoreceptor population and optic nerve development. Required for retinal circadian rhythm photoentrainment. In Danio rerio (Zebrafish), this protein is Transcription factor atoh7.